We begin with the raw amino-acid sequence, 217 residues long: NADPH-dependent 3-demethoxyubiquinone 3-hydroxylase, mitochondrial (217 aa).

A mitochondrion-targeting transit peptide spans 1–34 (MSCARALAACCLWRLRTGALQPLSAYGRRISVRF). Repeat copies occupy residues 48-129 (AVDR…TALL) and 130-217 (GKEG…SERL). Residues 48 to 217 (AVDRIIRVDH…KVAIYLSERL (170 aa)) form a 2 X approximate tandem repeats region. An NADH-binding site is contributed by Arg-51. Residues Glu-60, Glu-90, His-93, Glu-142, Glu-178, and His-181 each coordinate Fe cation. Residues Lys-208, Tyr-212, and Arg-216 each coordinate NADH.

Belongs to the COQ7 family. As to quaternary structure, component of a multi-subunit COQ enzyme complex. Interacts with COQ8B and COQ6. Interacts with COQ9. Fe cation serves as cofactor.

Its subcellular location is the mitochondrion inner membrane. The catalysed reaction is a 5-methoxy-2-methyl-3-(all-trans-polyprenyl)benzoquinone + NADH + O2 = a 3-demethylubiquinone + NAD(+) + H2O. It functions in the pathway cofactor biosynthesis; ubiquinone biosynthesis. Functionally, catalyzes the hydroxylation of the 5-methoxy-2-methyl-3-(all-trans-polyprenyl)benzoquinone at the C6 position and participates in the biosynthesis of ubiquinone. Catalyzes the reaction through a substrate-mediated reduction pathway, whereby NADH shuttles electrons to 5-methoxy-2-methyl-3-(all-trans-decaprenyl)benzoquinone, which then transfers the electrons to the two Fe(3+) centers. The binding of 5-methoxy-2-methyl-3-(all-trans-polyprenyl)benzoquinone (DMQn) mediates reduction of the diiron center by nicotinamide adenine dinucleotide (NADH) and initiates oxygen activation for subsequent DMQ hydroxylation. The physiological substrates are 5-methoxy-2-methyl-3-(all-trans-nonaprenyl)benzoquinone (DMQ(9)) and 5-methoxy-2-methyl-3-(all-trans-decaprenyl)benzoquinone (DMQ(10)), however in vitro the enzyme does not have any specificity concerning the length of the polyprenyl tail, and accepts tails of various lengths with similar efficiency. Also has a structural role in the COQ enzyme complex, stabilizing other COQ polypeptides. Involved in lifespan determination in a ubiquinone-independent manner. Plays a role in modulating mitochondrial stress responses, acting in the nucleus, perhaps via regulating gene expression, independent of its characterized mitochondrial function in ubiquinone biosynthesis. The sequence is that of NADPH-dependent 3-demethoxyubiquinone 3-hydroxylase, mitochondrial from Bos taurus (Bovine).